The chain runs to 77 residues: Acyl carrier protein (77 aa).

The 74-residue stretch at 4–77 (SETFEKVKKI…TVQAAVDXIN (74 aa)) folds into the Carrier domain. O-(pantetheine 4'-phosphoryl)serine is present on serine 40.

The protein belongs to the acyl carrier protein (ACP) family. 4'-phosphopantetheine is transferred from CoA to a specific serine of apo-ACP by AcpS. This modification is essential for activity because fatty acids are bound in thioester linkage to the sulfhydryl of the prosthetic group.

The protein localises to the cytoplasm. It participates in lipid metabolism; fatty acid biosynthesis. In terms of biological role, carrier of the growing fatty acid chain in fatty acid biosynthesis. In Anabaena variabilis, this protein is Acyl carrier protein.